Consider the following 329-residue polypeptide: DNA-directed RNA polymerase subunit alpha (329 aa).

Residues 1-235 (MQGSVTEFLK…EQLEAFVDLR (235 aa)) are alpha N-terminal domain (alpha-NTD). Positions 249-329 (FDPILLRPVD…DWPPASIADE (81 aa)) are alpha C-terminal domain (alpha-CTD).

The protein belongs to the RNA polymerase alpha chain family. As to quaternary structure, homodimer. The RNAP catalytic core consists of 2 alpha, 1 beta, 1 beta' and 1 omega subunit. When a sigma factor is associated with the core the holoenzyme is formed, which can initiate transcription.

The catalysed reaction is RNA(n) + a ribonucleoside 5'-triphosphate = RNA(n+1) + diphosphate. DNA-dependent RNA polymerase catalyzes the transcription of DNA into RNA using the four ribonucleoside triphosphates as substrates. The chain is DNA-directed RNA polymerase subunit alpha from Salmonella choleraesuis (strain SC-B67).